The primary structure comprises 206 residues: Glycerol-3-phosphate acyltransferase (206 aa).

6 helical membrane passes run 6-26 (IFLAFLCIGVSYSLGSFPSGF), 57-77 (KAALIVFLIDVSKGIGSILIA), 86-106 (FHVICGIAALSGHIWPIWLNW), 118-138 (VFLGISWQVGLASLGIFMAVL), 143-163 (IVSLSSISAAISLPILMFLSL), and 165-185 (EASFLNAYIIASFAAMIMVLW).

The protein belongs to the PlsY family. Probably interacts with PlsX.

It localises to the cell inner membrane. It carries out the reaction an acyl phosphate + sn-glycerol 3-phosphate = a 1-acyl-sn-glycero-3-phosphate + phosphate. It functions in the pathway lipid metabolism; phospholipid metabolism. Functionally, catalyzes the transfer of an acyl group from acyl-phosphate (acyl-PO(4)) to glycerol-3-phosphate (G3P) to form lysophosphatidic acid (LPA). This enzyme utilizes acyl-phosphate as fatty acyl donor, but not acyl-CoA or acyl-ACP. The protein is Glycerol-3-phosphate acyltransferase of Prochlorococcus marinus (strain MIT 9211).